The sequence spans 36 residues: Photosystem I reaction center subunit VIII (36 aa).

The helical transmembrane segment at 7–29 threads the bilayer; it reads PSIFVPLVGLVFPAITMASLFIY.

It belongs to the PsaI family.

It is found in the plastid. The protein localises to the chloroplast thylakoid membrane. Functionally, may help in the organization of the PsaL subunit. This is Photosystem I reaction center subunit VIII from Psilotum nudum (Whisk fern).